The primary structure comprises 458 residues: GTPase Der (458 aa).

EngA-type G domains are found at residues 4–169 and 178–353; these read PSIA…PKDF and VMMS…TQHR. GTP is bound by residues 10 to 17, 57 to 61, 120 to 123, 184 to 191, 231 to 235, and 296 to 299; these read GRPNVGKS, DTGGL, NKCE, DTAGI, and NKWD. Residues 354–439 form the KH-like domain; sequence MRVTTSVVNE…PIILLWRGKQ (86 aa).

Belongs to the TRAFAC class TrmE-Era-EngA-EngB-Septin-like GTPase superfamily. EngA (Der) GTPase family. As to quaternary structure, associates with the 50S ribosomal subunit.

In terms of biological role, GTPase that plays an essential role in the late steps of ribosome biogenesis. The sequence is that of GTPase Der from Prochlorococcus marinus (strain MIT 9515).